Reading from the N-terminus, the 717-residue chain is Photosystem I P700 chlorophyll a apoprotein A1 (717 aa).

8 consecutive transmembrane segments (helical) span residues 58 to 81, 144 to 167, 183 to 207, 279 to 297, 334 to 357, 373 to 399, 421 to 443, and 519 to 537; these read VFSA…FHGA, LYCT…FHYH, LNHH…HVSL, IAHH…GHMY, WHAQ…HHMY, LSLF…IFMV, AIIS…LYIH, and FLVH…LILL. [4Fe-4S] cluster contacts are provided by Cys561 and Cys570. 2 helical membrane-spanning segments follow: residues 577-598 and 652-674; these read HVFL…HFSW and LSAY…MFLF. His663 contributes to the chlorophyll a' binding site. The chlorophyll a site is built by Met671 and Tyr679. Residue Trp680 coordinates phylloquinone. The helical transmembrane segment at 712 to 717 threads the bilayer; sequence AVGVTH.

This sequence belongs to the PsaA/PsaB family. The PsaA/B heterodimer binds the P700 chlorophyll special pair and subsequent electron acceptors. PSI consists of a core antenna complex that captures photons, and an electron transfer chain that converts photonic excitation into a charge separation. The eukaryotic PSI reaction center is composed of at least 11 subunits. Requires P700 is a chlorophyll a/chlorophyll a' dimer, A0 is one or more chlorophyll a, A1 is one or both phylloquinones and FX is a shared 4Fe-4S iron-sulfur center. as cofactor.

The protein localises to the plastid. The protein resides in the chloroplast thylakoid membrane. The enzyme catalyses reduced [plastocyanin] + hnu + oxidized [2Fe-2S]-[ferredoxin] = oxidized [plastocyanin] + reduced [2Fe-2S]-[ferredoxin]. PsaA and PsaB bind P700, the primary electron donor of photosystem I (PSI), as well as the electron acceptors A0, A1 and FX. PSI is a plastocyanin-ferredoxin oxidoreductase, converting photonic excitation into a charge separation, which transfers an electron from the donor P700 chlorophyll pair to the spectroscopically characterized acceptors A0, A1, FX, FA and FB in turn. Oxidized P700 is reduced on the lumenal side of the thylakoid membrane by plastocyanin. The protein is Photosystem I P700 chlorophyll a apoprotein A1 of Drimys winteri (Winter's bark).